The chain runs to 207 residues: MESKSPGYITPKKPALSASARKIKDNAADWHNLMLKWETYNNDSFNIASKIVNLKITAESADRMLLDEPSPNKDNITTDKVELDRLCSELLQTIENMEKIWTKMEKITATFKGICDLEAYQFPGDTSKPTHFHTWPTTLFYETSMKMVDMYKKEIQLKRTIVGDLAHTSDQDLRMVYLSCWLYQPYIDNNIKVLLESMLLETGHRPI.

Residues 78–99 (TDKVELDRLCSELLQTIENMEK) are a coiled coil.

This sequence belongs to the CINP family. In terms of assembly, homodimer. Part of the 55LCC heterohexameric ATPase complex.

Its subcellular location is the nucleus. Its function is as follows. Component of the DNA replication complex, which interacts with two kinases, CDK2 and CDC7, thereby providing a functional and physical link between CDK2 and CDC7 during firing of the origins of replication. Regulates ATR-mediated checkpoint signaling in response to DNA damage. Part of the 55LCC heterohexameric ATPase complex which is chromatin-associated and promotes replisome proteostasis to maintain replication fork progression and genome stability. Required for replication fork progression, sister chromatid cohesion, and chromosome stability. The ATPase activity is specifically enhanced by replication fork DNA and is coupled to cysteine protease-dependent cleavage of replisome substrates in response to replication fork damage. Uses ATPase activity to process replisome substrates in S-phase, facilitating their proteolytic turnover from chromatin to ensure DNA replication and mitotic fidelity. As part of 55LCC complex, also involved in the cytoplasmic maturation steps of pre-60S ribosomal particles by promoting the release of shuttling protein RSL24D1/RLP24 from the pre-ribosomal particles. This chain is Cyclin-dependent kinase 2-interacting protein (cinp), found in Xenopus laevis (African clawed frog).